A 243-amino-acid polypeptide reads, in one-letter code: tRNA (guanine-N(1)-)-methyltransferase (243 aa).

Residues G113 and 133–138 (IGDFVL) contribute to the S-adenosyl-L-methionine site.

The protein belongs to the RNA methyltransferase TrmD family. As to quaternary structure, homodimer.

Its subcellular location is the cytoplasm. The enzyme catalyses guanosine(37) in tRNA + S-adenosyl-L-methionine = N(1)-methylguanosine(37) in tRNA + S-adenosyl-L-homocysteine + H(+). Functionally, specifically methylates guanosine-37 in various tRNAs. The polypeptide is tRNA (guanine-N(1)-)-methyltransferase (Bacillus velezensis (strain DSM 23117 / BGSC 10A6 / LMG 26770 / FZB42) (Bacillus amyloliquefaciens subsp. plantarum)).